Reading from the N-terminus, the 772-residue chain is MRNRRKAVSLLTGLLVTAQLFPTAALAADSSESALNKAPGYQDFPAYYSDSAHADDQVTHPDVVVLEEPWNGYRYWAVYTPNVMRISIYENPSIVASSDGVHWVEPEGLSNPIEPQPPSTRYHNCDADMVYNAEYDAMMAYWNWADDQGGGVGAEVRLRISYDGVHWGVPVTYDEMTRVWSKPTSDAERQVADGEDDFITAIASPDRYDMLSPTIVYDDFRDVFILWANNTGDVGYQNGQANFVEMRYSDDGITWGEPVRVNGFLGLDENGQQLAPWHQDVQYVPDLKEFVCISQCFAGRNPDGSVLHLTTSKDGVNWEQVGTKPLLSPGPDGSWDDFQIYRSSFYYEPGSSAGDGTMRVWYSALQKDTNNKMVADSSGNLTIQAKSEDDRIWRIGYAENSFVEMMRVLLDDPGYTTPALVSGNSLMLSAETTSLPTGDVMKLETSFAPVDTSDQVVKYTSSDPDVATVDEFGTITGVSVGSARIMAETREGLSDDLEIAVVENPYTLIPQSNMTATATSVYGGTTEGPASNVLDGNVRTIWHTNYAPKDELPQSITVSFDQPYTVGRFVYTPRQNGTNGIISEYELYAIHQDGSKDLVASGSDWALDAKDKTVSFAPVEAVGLELKAIAGAGGFGTAAELNVYAYGPIEPAPVYVPVDDRDASLVFTGAWNSDSNGSFYEGTARYTNEIGASVEFTFVGTAIRWYGQNDVNFGAAEVYVDGVLAGEVNVYGPAAAQQLLFEADGLAYGKHTIRIVCVSPVVDFDYFSYVGE.

The first 27 residues, Met1–Ala27, serve as a signal peptide directing secretion. The substrate site is built by Ser87 and His123. Residue Asp126 coordinates a divalent metal cation. A deacetylase activity region spans residues Trp180–Phe402. Tyr236 lines the substrate pocket. A divalent metal cation is bound at residue His278. Positions Ser494–Trp605 constitute an F5/8 type C domain. The CBM32 carbohydrate-binding domain stretch occupies residues Val502–Asp765. Residues Thr515 to Glu772 are not required for activity on soluble substrates.

It depends on a divalent metal cation as a cofactor.

It carries out the reaction an N-acetyl-alpha-D-galactosaminyl-(1-&gt;3)-[alpha-L-fucosyl-(1-&gt;2)]-beta-D-galactosyl derivative + H2O = an alpha-D-galactosaminyl-(1-&gt;3)-[alpha-L-fucosyl-(1-&gt;2)]-beta-D-galactosyl derivative + acetate. With respect to regulation, inhibited by EDTA. Functionally, one of an enzyme pair that work together to convert the A antigen to the H antigen of the O blood type, which together release galactosamine. Catalyzes the first step in the conversion, generating the substrate for the subsequent enzyme (FpGalNase, AC P0DTR5). Works on many different A antigen subtypes. Glu-90 probably activates a nucleophilic water molecule to start the deacetylation reaction. The sequence is that of A type blood N-acetyl-alpha-D-galactosamine deacetylase from Flavonifractor plautii (Fusobacterium plautii).